Reading from the N-terminus, the 438-residue chain is Serine hydroxymethyltransferase 1 (438 aa).

Residues Leu130 and 134–136 (GHL) each bind (6S)-5,6,7,8-tetrahydrofolate. Lys239 bears the N6-(pyridoxal phosphate)lysine mark.

This sequence belongs to the SHMT family. In terms of assembly, homodimer. Pyridoxal 5'-phosphate is required as a cofactor.

Its subcellular location is the cytoplasm. It carries out the reaction (6R)-5,10-methylene-5,6,7,8-tetrahydrofolate + glycine + H2O = (6S)-5,6,7,8-tetrahydrofolate + L-serine. Its pathway is one-carbon metabolism; tetrahydrofolate interconversion. It functions in the pathway amino-acid biosynthesis; glycine biosynthesis; glycine from L-serine: step 1/1. Its function is as follows. Catalyzes the reversible interconversion of serine and glycine with tetrahydrofolate (THF) serving as the one-carbon carrier. This reaction serves as the major source of one-carbon groups required for the biosynthesis of purines, thymidylate, methionine, and other important biomolecules. Also exhibits THF-independent aldolase activity toward beta-hydroxyamino acids, producing glycine and aldehydes, via a retro-aldol mechanism. This is Serine hydroxymethyltransferase 1 from Mycobacterium tuberculosis (strain CDC 1551 / Oshkosh).